The chain runs to 129 residues: Fluoride-specific ion channel FluC (129 aa).

Helical transmembrane passes span 8-28, 36-56, 71-91, and 103-123; these read FFCVAVGGAIGASARFAMVLA, AFPFATLTVNIIGSFFLGLLL, FLGVGLLGAFTTFSTFSVEVV, and ALHIAFNVIICIAAVFAAMML. 2 residues coordinate Na(+): Gly-78 and Thr-81.

It belongs to the fluoride channel Fluc/FEX (TC 1.A.43) family.

It localises to the cell inner membrane. The enzyme catalyses fluoride(in) = fluoride(out). Its activity is regulated as follows. Na(+) is not transported, but it plays an essential structural role and its presence is essential for fluoride channel function. Functionally, fluoride-specific ion channel. Important for reducing fluoride concentration in the cell, thus reducing its toxicity. This chain is Fluoride-specific ion channel FluC, found in Idiomarina loihiensis (strain ATCC BAA-735 / DSM 15497 / L2-TR).